The chain runs to 292 residues: Elongation factor Ts (292 aa).

Residues Thr82–Val85 are involved in Mg(2+) ion dislocation from EF-Tu.

Belongs to the EF-Ts family.

It localises to the cytoplasm. Its function is as follows. Associates with the EF-Tu.GDP complex and induces the exchange of GDP to GTP. It remains bound to the aminoacyl-tRNA.EF-Tu.GTP complex up to the GTP hydrolysis stage on the ribosome. This is Elongation factor Ts from Bordetella bronchiseptica (strain ATCC BAA-588 / NCTC 13252 / RB50) (Alcaligenes bronchisepticus).